The sequence spans 275 residues: 2,3,4,5-tetrahydropyridine-2,6-dicarboxylate N-succinyltransferase (275 aa).

Substrate is bound by residues R104 and D141.

It belongs to the transferase hexapeptide repeat family. In terms of assembly, homotrimer.

Its subcellular location is the cytoplasm. The catalysed reaction is (S)-2,3,4,5-tetrahydrodipicolinate + succinyl-CoA + H2O = (S)-2-succinylamino-6-oxoheptanedioate + CoA. The protein operates within amino-acid biosynthesis; L-lysine biosynthesis via DAP pathway; LL-2,6-diaminopimelate from (S)-tetrahydrodipicolinate (succinylase route): step 1/3. This is 2,3,4,5-tetrahydropyridine-2,6-dicarboxylate N-succinyltransferase from Aeromonas salmonicida (strain A449).